The following is a 718-amino-acid chain: Class E vacuolar protein-sorting machinery protein HSE1 (718 aa).

The region spanning 17-146 (ATDENLTSED…RLKQTNPQLQ (130 aa)) is the VHS domain. Disordered stretches follow at residues 142–164 (NPQLQPPSAPQKNSLTDVDRQKE) and 178–230 (EEER…TGTG). One can recognise a UIM domain in the interval 163-182 (KEEEELQIALKLSLQEEERK). Composition is skewed to low complexity over residues 187-202 (PAGPSGAAGPSSSSAP) and 210-221 (GQGADAGAGAAA). In terms of domain architecture, SH3 spans 234–293 (ATVSRVRALYDFVPSEDGELEFKKGDVIAVLESVYKDWWRGSLKGKTGIFPLNYVEKLAD). A disordered region spans residues 384-718 (SMSHPPQPSY…YRQPGGTANY (335 aa)). Pro residues predominate over residues 408–438 (TPYPTQGPPQQDPQRFYPPGPHPDQYPPSSP). The span at 509-520 (PYAAYSQPPAQQ) shows a compositional bias: low complexity. Residues 521 to 534 (GSYGNPQELSTSAY) show a composition bias toward polar residues. Positions 581-604 (QQPYQYNSYQNQTPPQPANTQPPQ) are enriched in low complexity. Positions 624–637 (PPQPTSAAPPPPVP) are enriched in pro residues. Low complexity-rich tracts occupy residues 665–680 (GPGAPSAPLGGPSSPG) and 689–706 (VPPGSSGPSAPSAPSVPA).

The protein belongs to the STAM family. As to quaternary structure, component of the ESCRT-0 complex composed of HSE1 and VPS27.

The protein localises to the endosome membrane. In terms of biological role, component of the ESCRT-0 complex which is the sorting receptor for ubiquitinated cargo proteins at the multivesicular body (MVB). This Pyricularia oryzae (strain 70-15 / ATCC MYA-4617 / FGSC 8958) (Rice blast fungus) protein is Class E vacuolar protein-sorting machinery protein HSE1 (HSE1).